We begin with the raw amino-acid sequence, 427 residues long: NADPH-dependent stearoyl-CoA 9-desaturase (427 aa).

Residues H90, H94, H125, H129, H130, H304, H308, and H309 each contribute to the Fe cation site.

The protein belongs to the fatty acid desaturase type 1 family. Interacts with the electron transfer protein Rv3230c to form a functional acyl-CoA desaturase complex. Fe(2+) is required as a cofactor. Post-translationally, is rapidly degraded by a mycobacterial protein degradation system that specifically targets the residues LAA at the C-terminus, leading to a post-translational proteolytic regulation of DesA3 essential activity.

Its subcellular location is the cell membrane. It catalyses the reaction octadecanoyl-CoA + NADPH + O2 + H(+) = (9Z)-octadecenoyl-CoA + NADP(+) + 2 H2O. The protein operates within lipid metabolism; fatty acid metabolism. Functionally, is likely involved in the aerobic desaturation system responsible for the synthesis of oleic acid from stearoyl-CoA; oleic acid is a precursor of mycobacterial membrane phospholipids and triglycerides. Catalyzes the conversion of stearoyl-CoA to oleoyl-CoA by introduction of a cis double bond between carbons 9 and 10 of the acyl chain. Requires the electron transfer partner Rv3230c to pass two electrons from NADPH to its active site diiron center. Is also able to catalyze the 9-desaturation of palmitoyl-CoA to palmitoleoyl-CoA. The sequence is that of NADPH-dependent stearoyl-CoA 9-desaturase (desA3) from Mycobacterium tuberculosis (strain CDC 1551 / Oshkosh).